Reading from the N-terminus, the 305-residue chain is UDP-3-O-acyl-N-acetylglucosamine deacetylase (305 aa).

Residues H77, H234, and D238 each contribute to the Zn(2+) site. H261 (proton donor) is an active-site residue.

This sequence belongs to the LpxC family. The cofactor is Zn(2+).

It catalyses the reaction a UDP-3-O-[(3R)-3-hydroxyacyl]-N-acetyl-alpha-D-glucosamine + H2O = a UDP-3-O-[(3R)-3-hydroxyacyl]-alpha-D-glucosamine + acetate. Its pathway is glycolipid biosynthesis; lipid IV(A) biosynthesis; lipid IV(A) from (3R)-3-hydroxytetradecanoyl-[acyl-carrier-protein] and UDP-N-acetyl-alpha-D-glucosamine: step 2/6. Its function is as follows. Catalyzes the hydrolysis of UDP-3-O-myristoyl-N-acetylglucosamine to form UDP-3-O-myristoylglucosamine and acetate, the committed step in lipid A biosynthesis. In Oleidesulfovibrio alaskensis (strain ATCC BAA-1058 / DSM 17464 / G20) (Desulfovibrio alaskensis), this protein is UDP-3-O-acyl-N-acetylglucosamine deacetylase.